The primary structure comprises 1287 residues: Vacuolating cytotoxin autotransporter (1287 aa).

An N-terminal signal peptide occupies residues 1 to 33; it reads MEIQQTHRKINRPLVSLALVGALVSITPQQSHA. The disordered stretch occupies residues 326 to 381; the sequence is PPEGGYKDKPNNTPSQSGAKNDKQESSQNNSNTQVINPPNSTQKTEVQPTQVIDGP. Residues 351–376 are compositionally biased toward polar residues; the sequence is SSQNNSNTQVINPPNSTQKTEVQPTQ. One can recognise an Autotransporter domain in the interval 1014–1287; it reads KYEKPTNVWA…ASNLGMRYSF (274 aa).

The protein resides in the periplasm. The protein localises to the secreted. It is found in the cell surface. Its subcellular location is the cell outer membrane. Induces vacuolation of eukaryotic cells. Causes ulceration and gastric lesions. In Helicobacter pylori (Campylobacter pylori), this protein is Vacuolating cytotoxin autotransporter (vacA).